Reading from the N-terminus, the 402-residue chain is 1-deoxy-D-xylulose 5-phosphate reductoisomerase (402 aa).

NADPH is bound by residues Thr-13, Gly-14, Ser-15, Ile-16, and Asn-126. Lys-127 contributes to the 1-deoxy-D-xylulose 5-phosphate binding site. Glu-128 lines the NADPH pocket. Asp-152 contacts Mn(2+). 1-deoxy-D-xylulose 5-phosphate contacts are provided by Ser-153, Glu-154, Ser-188, and His-211. Glu-154 provides a ligand contact to Mn(2+). Residue Gly-217 coordinates NADPH. Residues Ser-224, Asn-229, Lys-230, and Glu-233 each coordinate 1-deoxy-D-xylulose 5-phosphate. Position 233 (Glu-233) interacts with Mn(2+).

Belongs to the DXR family. The cofactor is Mg(2+). Mn(2+) is required as a cofactor.

It carries out the reaction 2-C-methyl-D-erythritol 4-phosphate + NADP(+) = 1-deoxy-D-xylulose 5-phosphate + NADPH + H(+). The protein operates within isoprenoid biosynthesis; isopentenyl diphosphate biosynthesis via DXP pathway; isopentenyl diphosphate from 1-deoxy-D-xylulose 5-phosphate: step 1/6. In terms of biological role, catalyzes the NADPH-dependent rearrangement and reduction of 1-deoxy-D-xylulose-5-phosphate (DXP) to 2-C-methyl-D-erythritol 4-phosphate (MEP). This chain is 1-deoxy-D-xylulose 5-phosphate reductoisomerase, found in Psychrobacter arcticus (strain DSM 17307 / VKM B-2377 / 273-4).